The sequence spans 181 residues: uncharacterized protein (181 aa).

This is an uncharacterized protein from Sinorhizobium fredii (strain NBRC 101917 / NGR234).